A 344-amino-acid chain; its full sequence is L-rhamnose-proton symporter (344 aa).

The next 10 helical transmembrane spans lie at 4–24 (AITM…CFYA), 38–58 (WSVG…ALLL), 68–88 (FSLS…IGNI), 101–121 (MGIG…TPII), 137–157 (TLLG…AGQL), 175–195 (LVLA…MNAA), 214–234 (LPSY…FCFI), 259–279 (VLLS…YAWG), 290–310 (ISWM…GLVL), and 323–343 (VLSL…IGMA).

The protein belongs to the L-rhamnose transporter (TC 2.A.7.6) family.

The protein localises to the cell inner membrane. It catalyses the reaction L-rhamnopyranose(in) + H(+)(in) = L-rhamnopyranose(out) + H(+)(out). In terms of biological role, uptake of L-rhamnose across the cytoplasmic membrane with the concomitant transport of protons into the cell (symport system). This is L-rhamnose-proton symporter from Escherichia coli O1:K1 / APEC.